The primary structure comprises 101 residues: Guanyl-specific ribonuclease Po1 (101 aa).

Position 1 is a pyrrolidone carboxylic acid (glutamine 1). Disulfide bonds link cysteine 7/cysteine 84, cysteine 9/cysteine 99, and cysteine 48/cysteine 82. Histidine 36 is an active-site residue. Glutamate 54 acts as the Proton acceptor in catalysis. Histidine 87 functions as the Proton donor in the catalytic mechanism.

It belongs to the ribonuclease N1/T1 family.

The enzyme catalyses [RNA] containing guanosine + H2O = an [RNA fragment]-3'-guanosine-3'-phosphate + a 5'-hydroxy-ribonucleotide-3'-[RNA fragment].. With respect to regulation, inhibited by divalent cations. Inhibition decreases in the order zinc, lead, cadmium, nickel, mercury. This chain is Guanyl-specific ribonuclease Po1, found in Pleurotus ostreatus (Oyster mushroom).